Reading from the N-terminus, the 325-residue chain is MFTTVRPQSTLTPPTANLIPNDLFTAINELKKDLNAVILAHYYQDPDIQDIADFIGDSLALSQQAASTNAEVIVFAGVHFMAETAKILNPDKLVLLPDLNAGCSLADSCPPEAFAQFKAQYPGCLVVSYINCTAEIKAMSDIICTSSNAVKIVNQLPKDRPIIFAPDRNLGRYVMEQTRRELILWQGSCMVHETFSEKKIVQLKIEYPEAEIIAHPECEPSVLRHANYIGSTTALLNYSQQSASQIFIVATEPGIIHQMEKETPHKRFIPAPAINNCACNECPHMRLNTLEKLYLAMKFKQPEITMDETIRLAALRPIQRMLEMS.

Iminosuccinate-binding residues include His-41 and Ser-58. Cys-103 is a [4Fe-4S] cluster binding site. Iminosuccinate contacts are provided by residues 129–131 and Ser-146; that span reads YIN. Cys-189 provides a ligand contact to [4Fe-4S] cluster. Iminosuccinate contacts are provided by residues 215–217 and Thr-232; that span reads HPE. [4Fe-4S] cluster is bound at residue Cys-282.

Belongs to the quinolinate synthase family. Type 2 subfamily. Requires [4Fe-4S] cluster as cofactor.

Its subcellular location is the cytoplasm. It catalyses the reaction iminosuccinate + dihydroxyacetone phosphate = quinolinate + phosphate + 2 H2O + H(+). It functions in the pathway cofactor biosynthesis; NAD(+) biosynthesis; quinolinate from iminoaspartate: step 1/1. Functionally, catalyzes the condensation of iminoaspartate with dihydroxyacetone phosphate to form quinolinate. This chain is Quinolinate synthase, found in Rippkaea orientalis (strain PCC 8801 / RF-1) (Cyanothece sp. (strain PCC 8801)).